The following is a 447-amino-acid chain: Tektin-4 (447 aa).

Coiled-coil stretches lie at residues 69 to 144 and 304 to 423; these read ADRD…ALDA and FGRR…TNSL. The segment covering 72–81 has biased composition (basic and acidic residues); it reads DQSERQRHES. The interval 72 to 104 is disordered; it reads DQSERQRHESQQLAAETEALAQRTQQDSTRKVG. The segment covering 82–97 has biased composition (low complexity); it reads QQLAAETEALAQRTQQ.

It belongs to the tektin family. As to quaternary structure, microtubule inner protein component of sperm flagellar doublet microtubules. Ubiquitinated, leading to its degradation. Deubiquitinated by USP16, promoting its stability. Expressed in trachea multiciliated cells.

The protein resides in the cytoplasm. Its subcellular location is the cytoskeleton. It localises to the cilium axoneme. The protein localises to the flagellum axoneme. Microtubule inner protein (MIP) part of the dynein-decorated doublet microtubules (DMTs) in cilia and flagellar axoneme. Forms filamentous polymers in the walls of ciliary and flagellar microtubules. Contributes to normal sperm motility. The sequence is that of Tektin-4 (TEKT4) from Bos taurus (Bovine).